The primary structure comprises 292 residues: MAAAAAWTGAASPNSLLLSRSPPHAAALAPSPGSSMRRRLLLGVGTPAVAALAAAAPPAVLQDGAVTVLITAGAYSLVRVFDELTERRLIEKSLSRKVVHVLSGVLFMSSWPLFSNSTEARYFAAVVPFLNSMRLLIYGLRLYTDEALELLRGPLYYVLVLLFSVLVFWRESPIGIVSLSMMSGGDGFADIVGRRYGSAKLPFNRKKSWAGSISMFISGFLLSAMMMLYFSSLGYIDVIWEEALGKLALVALAATVVECVPVTEVVDDNISVPLATMLVAFLLFSSNRTIVN.

A chloroplast-targeting transit peptide spans 1–49 (MAAAAAWTGAASPNSLLLSRSPPHAAALAPSPGSSMRRRLLLGVGTPAV). The next 6 membrane-spanning stretches (helical) occupy residues 98 to 118 (VVHV…SNST), 120 to 142 (ARYF…GLRL), 148 to 168 (LELL…VLVF), 216 to 236 (FISG…LGYI), 243 to 263 (ALGK…VPVT), and 265 to 285 (VVDD…LLFS).

This sequence belongs to the polyprenol kinase family.

It is found in the plastid. It localises to the chloroplast membrane. It catalyses the reaction phytol + CTP = phytyl phosphate + CDP + H(+). It functions in the pathway cofactor biosynthesis; tocopherol biosynthesis. Its function is as follows. Involved in the activation and reutilization of phytol from chlorophyll degradation in plant metabolism, including tocopherol biosynthesis. Catalyzes the conversion of phytol to phytol monophosphate (PMP). The protein is Probable phytol kinase 2, chloroplastic of Glycine max (Soybean).